Reading from the N-terminus, the 426-residue chain is Serine--tRNA ligase (426 aa).

Position 233-235 (233-235 (TAE)) interacts with L-serine. 264–266 (RSE) serves as a coordination point for ATP. Glu-287 lines the L-serine pocket. 351–354 (EISS) contacts ATP. Ser-387 is a binding site for L-serine.

Belongs to the class-II aminoacyl-tRNA synthetase family. Type-1 seryl-tRNA synthetase subfamily. Homodimer. The tRNA molecule binds across the dimer.

It is found in the cytoplasm. The enzyme catalyses tRNA(Ser) + L-serine + ATP = L-seryl-tRNA(Ser) + AMP + diphosphate + H(+). It catalyses the reaction tRNA(Sec) + L-serine + ATP = L-seryl-tRNA(Sec) + AMP + diphosphate + H(+). The protein operates within aminoacyl-tRNA biosynthesis; selenocysteinyl-tRNA(Sec) biosynthesis; L-seryl-tRNA(Sec) from L-serine and tRNA(Sec): step 1/1. Catalyzes the attachment of serine to tRNA(Ser). Is also able to aminoacylate tRNA(Sec) with serine, to form the misacylated tRNA L-seryl-tRNA(Sec), which will be further converted into selenocysteinyl-tRNA(Sec). The protein is Serine--tRNA ligase of Clostridium botulinum (strain Kyoto / Type A2).